The primary structure comprises 156 residues: MKLTHVDEKGVKMVEVGHKKDMYRRAIAKGRIKLKPETIKLIREGKIEKGNVLAAAQIAGILAVKKTFDIIPLCHPIPLTGVDITFDFGEDYIEVTCEVRAIYKTGVEMEALTGVSVALLTIWDMVKAVEKDEKGQYPYTKIEEIRVVEKIKEERS.

Substrate is bound by residues 73–75 and 109–110; these read LCH and ME. The active site involves aspartate 124.

It belongs to the MoaC family. In terms of assembly, homohexamer; trimer of dimers.

The catalysed reaction is (8S)-3',8-cyclo-7,8-dihydroguanosine 5'-triphosphate = cyclic pyranopterin phosphate + diphosphate. It participates in cofactor biosynthesis; molybdopterin biosynthesis. Its function is as follows. Catalyzes the conversion of (8S)-3',8-cyclo-7,8-dihydroguanosine 5'-triphosphate to cyclic pyranopterin monophosphate (cPMP). In Pyrococcus furiosus (strain ATCC 43587 / DSM 3638 / JCM 8422 / Vc1), this protein is Probable cyclic pyranopterin monophosphate synthase.